Reading from the N-terminus, the 561-residue chain is AT-rich interactive domain-containing protein 3B (561 aa).

Residue Met1 is modified to N-acetylmethionine. Low complexity predominate over residues Met1–Gln17. Disordered regions lie at residues Met1–Arg36, Leu53–Phe122, and Pro136–Asp179. Residue Ser89 is modified to Phosphoserine. Positions Glu90–Glu109 are enriched in acidic residues. A compositionally biased stretch (basic and acidic residues) spans Gln152–Ser162. The segment covering Ala164–Leu178 has biased composition (polar residues). Ser165 is subject to Phosphoserine. An interaction with RB1 region spans residues Ser203 to Leu365. Residues Asp215–Lys307 enclose the ARID domain. Ser311 is subject to Phosphoserine. Arg361 bears the Asymmetric dimethylarginine mark. Residues Ser370 to Val397 are disordered. The 99-residue stretch at Ala419 to Val517 folds into the REKLES domain. An interaction with ARID3A region spans residues Ser490–Gln513. Positions Ser523–Ser552 are enriched in low complexity. The interval Ser523–Leu561 is disordered.

In terms of assembly, heterodimer with ARID3A. Interacts with unphosphorylated RB1. Expressed in placenta, testis and leukocytes. Expressed in neuroblastoma. Present in K-562 erythrocytic leukemia cell line (at protein level).

It localises to the nucleus. Functionally, transcription factor which may be involved in neuroblastoma growth and malignant transformation. Favors nuclear targeting of ARID3A. The chain is AT-rich interactive domain-containing protein 3B (ARID3B) from Homo sapiens (Human).